The primary structure comprises 156 residues: 2-C-methyl-D-erythritol 2,4-cyclodiphosphate synthase (156 aa).

The a divalent metal cation site is built by Asp-8 and His-10. 4-CDP-2-C-methyl-D-erythritol 2-phosphate-binding positions include 8 to 10 (DVH) and 34 to 35 (HS). His-42 contributes to the a divalent metal cation binding site. 4-CDP-2-C-methyl-D-erythritol 2-phosphate is bound by residues 56-58 (DIG), 61-65 (FPDTD), 100-106 (AQRPKMA), 132-135 (TTEE), and Phe-139.

The protein belongs to the IspF family. Homotrimer. It depends on a divalent metal cation as a cofactor.

It catalyses the reaction 4-CDP-2-C-methyl-D-erythritol 2-phosphate = 2-C-methyl-D-erythritol 2,4-cyclic diphosphate + CMP. The protein operates within isoprenoid biosynthesis; isopentenyl diphosphate biosynthesis via DXP pathway; isopentenyl diphosphate from 1-deoxy-D-xylulose 5-phosphate: step 4/6. In terms of biological role, involved in the biosynthesis of isopentenyl diphosphate (IPP) and dimethylallyl diphosphate (DMAPP), two major building blocks of isoprenoid compounds. Catalyzes the conversion of 4-diphosphocytidyl-2-C-methyl-D-erythritol 2-phosphate (CDP-ME2P) to 2-C-methyl-D-erythritol 2,4-cyclodiphosphate (ME-CPP) with a corresponding release of cytidine 5-monophosphate (CMP). The protein is 2-C-methyl-D-erythritol 2,4-cyclodiphosphate synthase of Clostridium perfringens (strain ATCC 13124 / DSM 756 / JCM 1290 / NCIMB 6125 / NCTC 8237 / Type A).